Here is a 356-residue protein sequence, read N- to C-terminus: Putative KilA-N domain-containing protein R878 (356 aa).

Residues 1-12 (MKVRKSNNKPLK) show a composition bias toward basic residues. The tract at residues 1–114 (MKVRKSNNKP…DDDGSDNNVY (114 aa)) is disordered. The span at 14-46 (SASFTSGTKTGSKSAKSVNSGSKSMKSTKSSSK) shows a compositional bias: low complexity. A compositionally biased stretch (acidic residues) spans 66 to 114 (SDNDELSDNEISDNESSDDDEISDNESSDDDEISDNEISDDDGSDNNVY). A KilA-N domain is found at 130–239 (NYSKGKFGNF…VRIGFCMEEW (110 aa)).

This chain is Putative KilA-N domain-containing protein R878, found in Acanthamoeba polyphaga (Amoeba).